Here is a 108-residue protein sequence, read N- to C-terminus: Translation initiation factor 1A (108 aa).

Residues 11–85 form the S1-like domain; sequence PSKDVPKPEE…TKADIVYRYM (75 aa).

This sequence belongs to the eIF-1A family.

Its function is as follows. Seems to be required for maximal rate of protein biosynthesis. Enhances ribosome dissociation into subunits and stabilizes the binding of the initiator Met-tRNA(I) to 40 S ribosomal subunits. This is Translation initiation factor 1A (eIF1A) from Metallosphaera sedula (strain ATCC 51363 / DSM 5348 / JCM 9185 / NBRC 15509 / TH2).